Reading from the N-terminus, the 156-residue chain is SCP2 sterol-binding domain-containing protein 1 (156 aa).

One can recognise an SCP2 domain in the interval 44–156 (NFSVFEDISQ…ERIFREWAKI (113 aa)).

The polypeptide is SCP2 sterol-binding domain-containing protein 1 (Scp2d1) (Mus musculus (Mouse)).